The chain runs to 277 residues: DNA-binding transcriptional activator MhpR (277 aa).

Residues 12–74 (VRGLTRGLML…PSDDSFRLTI (63 aa)) form the HTH iclR-type domain. Residues 34-53 (VGLLAELSGLHRTTVRRLLE) constitute a DNA-binding region (H-T-H motif). Residues 89–262 (ISALAAPLLG…AKQIEEGVES (174 aa)) form the IclR-ED domain.

Its function is as follows. Activator of the mhpABCDFE operon coding for components of the 3-hydroxyphenylpropionate degradation pathway. The polypeptide is DNA-binding transcriptional activator MhpR (mhpR) (Escherichia coli (strain K12)).